A 680-amino-acid polypeptide reads, in one-letter code: DNA-directed RNA polymerase subunit beta' (680 aa).

Cys-69, Cys-71, Cys-87, and Cys-90 together coordinate Zn(2+). The Mg(2+) site is built by Asp-489, Asp-491, and Asp-493.

The protein belongs to the RNA polymerase beta' chain family. RpoC1 subfamily. In plastids the minimal PEP RNA polymerase catalytic core is composed of four subunits: alpha, beta, beta', and beta''. When a (nuclear-encoded) sigma factor is associated with the core the holoenzyme is formed, which can initiate transcription. It depends on Mg(2+) as a cofactor. Requires Zn(2+) as cofactor.

Its subcellular location is the plastid. The protein localises to the chloroplast. The enzyme catalyses RNA(n) + a ribonucleoside 5'-triphosphate = RNA(n+1) + diphosphate. In terms of biological role, DNA-dependent RNA polymerase catalyzes the transcription of DNA into RNA using the four ribonucleoside triphosphates as substrates. This is DNA-directed RNA polymerase subunit beta' from Ranunculus macranthus (Large buttercup).